Here is a 352-residue protein sequence, read N- to C-terminus: Phosphoribosylformylglycinamidine cyclo-ligase (352 aa).

Belongs to the AIR synthase family.

It is found in the cytoplasm. It catalyses the reaction 2-formamido-N(1)-(5-O-phospho-beta-D-ribosyl)acetamidine + ATP = 5-amino-1-(5-phospho-beta-D-ribosyl)imidazole + ADP + phosphate + H(+). Its pathway is purine metabolism; IMP biosynthesis via de novo pathway; 5-amino-1-(5-phospho-D-ribosyl)imidazole from N(2)-formyl-N(1)-(5-phospho-D-ribosyl)glycinamide: step 2/2. The sequence is that of Phosphoribosylformylglycinamidine cyclo-ligase from Teredinibacter turnerae (strain ATCC 39867 / T7901).